A 1149-amino-acid chain; its full sequence is DNA polymerase (1149 aa).

Residues 1 to 28 show a composition bias toward polar residues; it reads MSLVQSHGTSGLFTEPPNSINQQESSGP. The disordered stretch occupies residues 1-49; that stretch reads MSLVQSHGTSGLFTEPPNSINQQESSGPSLPAQDATQASASSARAGATP. Residues 31 to 49 show a composition bias toward low complexity; it reads PAQDATQASASSARAGATP.

The protein belongs to the DNA polymerase type-B family. Heterodimer with the terminal protein; this heterodimer binds to bp 9 to 18 of the genome. Forms a complex with viral pTP, DBP and hosts NFIA and POU2F1/OCT1 for initiation of replication.

It localises to the host nucleus. It catalyses the reaction DNA(n) + a 2'-deoxyribonucleoside 5'-triphosphate = DNA(n+1) + diphosphate. Eukaryotic-type DNA polymerase involved in viral genomic replication. DNA synthesis is protein primed, and acts in a strand displacement replication. Assembles in complex with viral pTP, DBP, host NFIA and host POU2F1/OCT1 on viral origin of replication. The polymerase covalently transfers dCMP onto pTP, thereby initiating complementary strand synthesis. The polypeptide is DNA polymerase (Canine adenovirus serotype 1 (strain CLL) (CAdV-1)).